A 144-amino-acid polypeptide reads, in one-letter code: Large ribosomal subunit protein uL11 (144 aa).

Belongs to the universal ribosomal protein uL11 family. In terms of assembly, part of the ribosomal stalk of the 50S ribosomal subunit. Interacts with L10 and the large rRNA to form the base of the stalk. L10 forms an elongated spine to which L12 dimers bind in a sequential fashion forming a multimeric L10(L12)X complex. In terms of processing, one or more lysine residues are methylated.

Its function is as follows. Forms part of the ribosomal stalk which helps the ribosome interact with GTP-bound translation factors. The sequence is that of Large ribosomal subunit protein uL11 from Deinococcus geothermalis (strain DSM 11300 / CIP 105573 / AG-3a).